The primary structure comprises 424 residues: Arginine biosynthesis bifunctional protein ArgJ (424 aa).

The substrate site is built by T172, K198, T209, E296, N419, and S424. T209 functions as the Nucleophile in the catalytic mechanism.

The protein belongs to the ArgJ family. Heterotetramer of two alpha and two beta chains.

Its subcellular location is the cytoplasm. It catalyses the reaction N(2)-acetyl-L-ornithine + L-glutamate = N-acetyl-L-glutamate + L-ornithine. The enzyme catalyses L-glutamate + acetyl-CoA = N-acetyl-L-glutamate + CoA + H(+). It participates in amino-acid biosynthesis; L-arginine biosynthesis; L-ornithine and N-acetyl-L-glutamate from L-glutamate and N(2)-acetyl-L-ornithine (cyclic): step 1/1. It functions in the pathway amino-acid biosynthesis; L-arginine biosynthesis; N(2)-acetyl-L-ornithine from L-glutamate: step 1/4. Catalyzes two activities which are involved in the cyclic version of arginine biosynthesis: the synthesis of N-acetylglutamate from glutamate and acetyl-CoA as the acetyl donor, and of ornithine by transacetylation between N(2)-acetylornithine and glutamate. The polypeptide is Arginine biosynthesis bifunctional protein ArgJ (Gluconobacter oxydans (strain 621H) (Gluconobacter suboxydans)).